Reading from the N-terminus, the 642-residue chain is Threonine--tRNA ligase (642 aa).

A TGS domain is found at Met1–Thr61. The catalytic stretch occupies residues Asp243–Pro534. Residues Cys334, His385, and His511 each contribute to the Zn(2+) site.

The protein belongs to the class-II aminoacyl-tRNA synthetase family. In terms of assembly, homodimer. Zn(2+) serves as cofactor.

The protein resides in the cytoplasm. It catalyses the reaction tRNA(Thr) + L-threonine + ATP = L-threonyl-tRNA(Thr) + AMP + diphosphate + H(+). In terms of biological role, catalyzes the attachment of threonine to tRNA(Thr) in a two-step reaction: L-threonine is first activated by ATP to form Thr-AMP and then transferred to the acceptor end of tRNA(Thr). Also edits incorrectly charged L-seryl-tRNA(Thr). The protein is Threonine--tRNA ligase of Shewanella baltica (strain OS195).